The primary structure comprises 143 residues: 3-hydroxyacyl-[acyl-carrier-protein] dehydratase FabZ (143 aa).

His-49 is a catalytic residue.

The protein belongs to the thioester dehydratase family. FabZ subfamily.

Its subcellular location is the cytoplasm. The enzyme catalyses a (3R)-hydroxyacyl-[ACP] = a (2E)-enoyl-[ACP] + H2O. Its function is as follows. Involved in unsaturated fatty acids biosynthesis. Catalyzes the dehydration of short chain beta-hydroxyacyl-ACPs and long chain saturated and unsaturated beta-hydroxyacyl-ACPs. The sequence is that of 3-hydroxyacyl-[acyl-carrier-protein] dehydratase FabZ from Ehrlichia chaffeensis (strain ATCC CRL-10679 / Arkansas).